The primary structure comprises 442 residues: Betaine reductase complex component B subunit alpha (442 aa).

Heterotetramer of two alpha and two beta subunits. Component of the betaine reductase complex, together with components A and C. PB is substrate specific.

The catalysed reaction is acetyl phosphate + trimethylamine + [thioredoxin]-disulfide + H2O = glycine betaine + [thioredoxin]-dithiol + phosphate + H(+). Functionally, in the first step of betaine reductase, the substrate is bound to component PB via a Schiff base intermediate. Then the PB-activated substrate is nucleophilically attacked by the selenol anion of component PA to transform it to a carboxymethylated selenoether and the respective amine. By action of component PC, acetyl phosphate is formed, leaving component PA in its oxidized state. Finally component PA becomes reduced by the thioredoxin system to start a new catalytic cycle of reductive deamination. The sequence is that of Betaine reductase complex component B subunit alpha (grdI) from Peptoclostridium acidaminophilum (Eubacterium acidaminophilum).